The following is a 388-amino-acid chain: MAQRDYYDVLGVDKNASESEISKAYRKLAKKYHPDLNHEPGAEEKYKEVNEAYEVLHDKQKRAQYDQFGQAGVNGQGGFGGQGFGGFGGQGGYSSQGFGDFGDIFGDIFGSAFGGGRSRVDPTAPQKGQDLDYTMTIDFMDAIKGKKTDITYTRSEVCPTCDGSGAEKGTHPITCDKCHGSGVMTVTRQTPLGVIQQQTTCDKCGGRGTIIEHPCQTCHGQGTVDKKQTLQVTVPAGIDNGQQIRLSGQGEAGKNGGPYGDLYIVFRVKPSKEFRRNGTTIYTEAPISFAQAALGDKIRVNTVHGPVDLTIPAGTQPNTNFKLRGQGVPKINGTGNGDQEVTVKVVIPKKINDKQKEALVDYVKAGGGNISPQEKNFFERLKDKLNGE.

In terms of domain architecture, J spans 5-69 (DYYDVLGVDK…QKRAQYDQFG (65 aa)). The segment at 145–227 (GKKTDITYTR…CHGQGTVDKK (83 aa)) adopts a CR-type zinc-finger fold. Positions 158, 161, 175, 178, 201, 204, 215, and 218 each coordinate Zn(2+). 4 CXXCXGXG motif repeats span residues 158-165 (CPTCDGSG), 175-182 (CDKCHGSG), 201-208 (CDKCGGRG), and 215-222 (CQTCHGQG).

It belongs to the DnaJ family. Homodimer. The cofactor is Zn(2+).

The protein localises to the cytoplasm. Its function is as follows. Participates actively in the response to hyperosmotic and heat shock by preventing the aggregation of stress-denatured proteins and by disaggregating proteins, also in an autonomous, DnaK-independent fashion. Unfolded proteins bind initially to DnaJ; upon interaction with the DnaJ-bound protein, DnaK hydrolyzes its bound ATP, resulting in the formation of a stable complex. GrpE releases ADP from DnaK; ATP binding to DnaK triggers the release of the substrate protein, thus completing the reaction cycle. Several rounds of ATP-dependent interactions between DnaJ, DnaK and GrpE are required for fully efficient folding. Also involved, together with DnaK and GrpE, in the DNA replication of plasmids through activation of initiation proteins. The polypeptide is Chaperone protein DnaJ (Lactobacillus johnsonii (strain CNCM I-12250 / La1 / NCC 533)).